A 118-amino-acid polypeptide reads, in one-letter code: MRSKFKDEHPFEKRKAEAERIRQKYADRIPVICEKVEKSDIATIDKKKYLVPSDLTVGQFVYVIRKRIKLSPEKAIFIFVDEVLPPTAALMSSIYEEHKDEDGFLYITYSGENTFGSI.

G116 carries the Phosphatidylethanolamine amidated glycine lipid modification. Positions 117-118 are cleaved as a propeptide — removed in mature form; that stretch reads SI.

The protein belongs to the ATG8 family. As to quaternary structure, conjugation to phosphatidylethanolamine (PE) leads to homodimerization. Interacts with ATG1, ATG3, ATG4, ATG7 and ATG12. In terms of processing, the C-terminal Ser-117 and Ile-118 residues of ATG8 are removed by ATG4 to expose Gly-116 at the C-terminus. This Gly-116 forms then a thioester bond with ATG7 (E1-like activating enzyme) before being transferred to ATG3 (the specific E2 conjugating enzyme), in order to be finally amidated with phosphatidylethanolamine. This lipid modification anchors ATG8 to membranes and can be reversed by ATG4, releasing soluble ATG8.

The protein localises to the cytoplasmic vesicle. It is found in the cvt vesicle membrane. The protein resides in the autophagosome membrane. Its subcellular location is the vacuole membrane. Its function is as follows. Ubiquitin-like modifier involved in cytoplasm to vacuole transport (Cvt) vesicles and autophagosome formation. With ATG4, mediates the delivery of the vesicles and autophagosomes to the vacuole via the microtubule cytoskeleton. Required for selective autophagic degradation of the nucleus (nucleophagy) as well as for mitophagy which contributes to regulate mitochondrial quantity and quality by eliminating the mitochondria to a basal level to fulfill cellular energy requirements and preventing excess ROS production. Also participates in membrane fusion events that take place in the early secretory pathway. Also involved in endoplasmic reticulum-specific autophagic process and is essential for the survival of cells subjected to severe ER stress. The ATG8-PE conjugate mediates tethering between adjacent membranes and stimulates membrane hemifusion, leading to expansion of the autophagosomal membrane during autophagy. Moreover not only conjugation, but also subsequent ATG8-PE deconjugation is an important step required to facilitate multiple events during macroautophagy, and especially for efficient autophagosome biogenesis, the assembly of ATG9-containing tubulovesicular clusters into phagophores/autophagosomes, and for the disassembly of PAS-associated ATG components. Contributes to conidiation by regulating the conidial levels of the conidiation-related protein CP15 and mediates fungal oxidation resistance by controlling total superoxide dismutase (SOD) activity. This is Autophagy-related protein 8 from Beauveria bassiana (strain ARSEF 2860) (White muscardine disease fungus).